The primary structure comprises 262 residues: GTP cyclohydrolase 1 type 2 homolog (262 aa).

Residues His-65, Asp-102, His-222, and Glu-225 each contribute to the a divalent metal cation site.

It belongs to the GTP cyclohydrolase I type 2/NIF3 family. In terms of assembly, homohexamer.

This is GTP cyclohydrolase 1 type 2 homolog from Streptococcus pyogenes serotype M6 (strain ATCC BAA-946 / MGAS10394).